A 167-amino-acid chain; its full sequence is Ribosome maturation factor RimM (167 aa).

Positions 94 to 167 constitute a PRC barrel domain; sequence EENEYFIKDL…VMVVHLLEGL (74 aa).

The protein belongs to the RimM family. Binds ribosomal protein uS19.

It is found in the cytoplasm. An accessory protein needed during the final step in the assembly of 30S ribosomal subunit, possibly for assembly of the head region. Essential for efficient processing of 16S rRNA. May be needed both before and after RbfA during the maturation of 16S rRNA. It has affinity for free ribosomal 30S subunits but not for 70S ribosomes. In Thermoanaerobacter pseudethanolicus (strain ATCC 33223 / 39E) (Clostridium thermohydrosulfuricum), this protein is Ribosome maturation factor RimM.